The primary structure comprises 239 residues: Diablo IAP-binding mitochondrial protein (239 aa).

Residues 1–22 (MAVLKSWLSRSVTLLFRYRQCL) constitute a mitochondrion transit peptide. The short motif at 56-60 (AVPIA) is the IAP-binding element. The disordered stretch occupies residues 217 to 239 (RQKTQEEGEERAESEQEAYLRED).

Belongs to the Smac/DIABLO protein family. In terms of assembly, homodimer. Interacts with BEX3. Interacts with BIRC2/c-IAP1 (via BIR3 domain). Interacts with BIRC6/BRUCE. Interacts with BIRC7/livin. Interacts with XIAP/BIRC4 (via BIR3 domain). Interacts with the monomeric and dimeric form of BIRC5/survivin. Interacts with AREL1 (via HECT domain); in the cytoplasm following induction of apoptosis. Ubiquitinated by BIRC7/livin. Ubiquitinated by BIRC6. In terms of processing, the precursor form is proteolytically cleaved by mitochondrial processing peptidase MPP to remove the transit peptide and produce an intermediate form. This is then processed by PARL to produce the mature cleaved form which is released from mitochondria into the cytosol in apoptotic cells.

It is found in the mitochondrion. Its subcellular location is the cytoplasm. It localises to the cytosol. Promotes apoptosis by activating caspases in the cytochrome c/Apaf-1/caspase-9 pathway. Acts by opposing the inhibitory activity of inhibitor of apoptosis proteins (IAP). Inhibits the activity of BIRC6/BRUCE by inhibiting its binding to caspases. The chain is Diablo IAP-binding mitochondrial protein from Pongo abelii (Sumatran orangutan).